The primary structure comprises 901 residues: Core protein VP3 (901 aa).

It belongs to the orbivirus VP3 family.

The protein resides in the virion. Its function is as follows. The VP3 protein is one of the five proteins (with VP1, VP4, VP6 and VP7) which form the inner capsid of the virus. The polypeptide is Core protein VP3 (Segment-3) (Antilocapra americana (Pronghorn)).